The primary structure comprises 146 residues: Putative pre-16S rRNA nuclease (146 aa).

The protein belongs to the YqgF nuclease family.

It localises to the cytoplasm. Functionally, could be a nuclease involved in processing of the 5'-end of pre-16S rRNA. The sequence is that of Putative pre-16S rRNA nuclease from Pseudomonas savastanoi pv. phaseolicola (strain 1448A / Race 6) (Pseudomonas syringae pv. phaseolicola (strain 1448A / Race 6)).